A 411-amino-acid chain; its full sequence is Acetyl-coenzyme A carboxylase carboxyl transferase subunit beta, chloroplastic (411 aa).

Positions 32 to 302 constitute a CoA carboxyltransferase N-terminal domain; the sequence is LWTRCDHCGV…KEQGRIPYGE (271 aa). Residues cysteine 36, cysteine 39, cysteine 55, and cysteine 58 each coordinate Zn(2+). Residues 36 to 58 form a C4-type zinc finger; it reads CDHCGVILYIKHLKENQRVCFGC.

Belongs to the AccD/PCCB family. As to quaternary structure, acetyl-CoA carboxylase is a heterohexamer composed of biotin carboxyl carrier protein, biotin carboxylase and 2 subunits each of ACCase subunit alpha and ACCase plastid-coded subunit beta (accD). Zn(2+) serves as cofactor.

It is found in the plastid. The protein localises to the chloroplast stroma. It carries out the reaction N(6)-carboxybiotinyl-L-lysyl-[protein] + acetyl-CoA = N(6)-biotinyl-L-lysyl-[protein] + malonyl-CoA. It participates in lipid metabolism; malonyl-CoA biosynthesis; malonyl-CoA from acetyl-CoA: step 1/1. In terms of biological role, component of the acetyl coenzyme A carboxylase (ACC) complex. Biotin carboxylase (BC) catalyzes the carboxylation of biotin on its carrier protein (BCCP) and then the CO(2) group is transferred by the transcarboxylase to acetyl-CoA to form malonyl-CoA. This Chlorella vulgaris (Green alga) protein is Acetyl-coenzyme A carboxylase carboxyl transferase subunit beta, chloroplastic.